A 459-amino-acid polypeptide reads, in one-letter code: Zinc finger protein ZFP2 (459 aa).

13 C2H2-type zinc fingers span residues 100–122 (YGCDECGKTFRQSSSLLKHQRIH), 128–150 (YTCNVCDKHFIERSSLTVHQRTH), 156–178 (YKCHECGKAFSQSMNLTVHQRTH), 184–206 (YQCKECGKAFRKNSSLIQHERIH), 212–234 (YKCHDCGKAFTQSMNLTVHQRTH), 240–262 (YECNQCGKAFSQSMHLIVHQRSH), 268–290 (YECSECGKAFSKSSTLTLHQRNH), 296–318 (YKCNKCGKSFSQSTYLIEHQRLH), 324–346 (FECNQCGKAFSKNSSLTQHRRIH), 352–374 (YECMICGKHFTGRSSLTVHQVIH), 380–402 (YECTECGKAFSQSAYLIEHQRIH), 408–430 (YECDQCGKAFIKNSSLIVHQRIH), and 436–458 (YQCNECGKSFSRSTNLTRHQRTH).

This sequence belongs to the krueppel C2H2-type zinc-finger protein family.

It is found in the nucleus. Probable transcription factor involved in neuronal differentiation and/or phenotypic maintenance. This chain is Zinc finger protein ZFP2 (Zfp2), found in Mus musculus (Mouse).